The chain runs to 272 residues: Ribonuclease HII (272 aa).

The 186-residue stretch at 87 to 272 (KYVAGVDEVG…HRMSFLKNIL (186 aa)) folds into the RNase H type-2 domain. 3 residues coordinate a divalent metal cation: Asp93, Glu94, and Asp188.

It belongs to the RNase HII family. Requires Mn(2+) as cofactor. Mg(2+) is required as a cofactor.

The protein localises to the cytoplasm. The enzyme catalyses Endonucleolytic cleavage to 5'-phosphomonoester.. Endonuclease that specifically degrades the RNA of RNA-DNA hybrids. This is Ribonuclease HII from Clostridium perfringens (strain SM101 / Type A).